The primary structure comprises 208 residues: CD209 antigen-like protein E (208 aa).

The Cytoplasmic segment spans residues 1 to 16; that stretch reads MRAPQMGSLGFLDKGH. The chain crosses the membrane as a helical; Signal-anchor for type II membrane protein span at residues 17-37; sequence IPLVLQLLFLILFTGLLVAII. Residues 38–208 lie on the Extracellular side of the membrane; the sequence is IQVSKMPSSE…KIATTCLSKW (171 aa). Disulfide bonds link C77–C88, C105–C197, and C176–C189. The C-type lectin domain maps to 83–198; it reads FFNGNCYFFS…CEQRKFWICK (116 aa).

It is found in the membrane. Its function is as follows. Putative pathogen-recognition receptor. May mediate the endocytosis of pathogens which are subsequently degraded in lysosomal compartments. The sequence is that of CD209 antigen-like protein E (Cd209e) from Mus musculus (Mouse).